Here is an 868-residue protein sequence, read N- to C-terminus: Translation initiation factor IF-2 (868 aa).

2 stretches are compositionally biased toward basic and acidic residues: residues 156-166 (ETVKEEEKINS) and 199-209 (SKKEEVKPEKV). 2 disordered regions span residues 156–177 (ETVKEEEKINSEENTAESQDEL) and 199–269 (SKKE…KYRE). Basic residues predominate over residues 249–260 (RGGRSKFKKKKG). Residues 368-537 (GRAPVVTIMG…LLQSEVLELK (170 aa)) enclose the tr-type G domain. The tract at residues 377–384 (GHVDHGKT) is G1. 377–384 (GHVDHGKT) serves as a coordination point for GTP. The tract at residues 402–406 (GITQH) is G2. The tract at residues 423-426 (DTPG) is G3. GTP is bound by residues 423 to 427 (DTPGH) and 477 to 480 (NKMD). Residues 477–480 (NKMD) are G4. The segment at 513 to 515 (SAK) is G5.

The protein belongs to the TRAFAC class translation factor GTPase superfamily. Classic translation factor GTPase family. IF-2 subfamily.

The protein resides in the cytoplasm. One of the essential components for the initiation of protein synthesis. Protects formylmethionyl-tRNA from spontaneous hydrolysis and promotes its binding to the 30S ribosomal subunits. Also involved in the hydrolysis of GTP during the formation of the 70S ribosomal complex. This Legionella pneumophila subsp. pneumophila (strain Philadelphia 1 / ATCC 33152 / DSM 7513) protein is Translation initiation factor IF-2.